Reading from the N-terminus, the 974-residue chain is Exocyst complex component 4 (974 aa).

Ala-2 is modified (N-acetylalanine). Lys-9 carries the post-translational modification N6-acetyllysine. Phosphoserine occurs at positions 32 and 226. Residues 32 to 114 (STSDDVEDRE…HCKRDELRKL (83 aa)) adopt a coiled-coil conformation. Thr-233 and Thr-237 each carry phosphothreonine. Residue Ser-468 is modified to Phosphoserine.

It belongs to the SEC8 family. As to quaternary structure, the exocyst complex is composed of EXOC1, EXOC2, EXOC3, EXOC4, EXOC5, EXOC6, EXOC7 and EXOC8. Interacts with BIRC6/bruce. Interacts with MYRIP. Interacts with SH3BP1; required for the localization of both SH3BP1 and the exocyst to the leading edge of migrating cells. Interacts with SLC6A9.

It is found in the midbody. It localises to the midbody ring. The protein resides in the cell projection. Its subcellular location is the cytoplasm. The protein localises to the cytoskeleton. It is found in the microtubule organizing center. It localises to the centrosome. Component of the exocyst complex involved in the docking of exocytic vesicles with fusion sites on the plasma membrane. This is Exocyst complex component 4 (EXOC4) from Homo sapiens (Human).